We begin with the raw amino-acid sequence, 584 residues long: Eukaryotic translation initiation factor 2D (584 aa).

Methionine 1 is modified (N-acetylmethionine). The 81-residue stretch at 93-173 (LPTFTTWPLV…RGFSVLHTYQ (81 aa)) folds into the PUA domain. A disordered region spans residues 223-257 (EEENGEVHQAREDKSLSEAPEDTSTRGLNQDSTDS). Basic and acidic residues predominate over residues 227–238 (GEVHQAREDKSL). Phosphoserine is present on residues serine 237, serine 254, and serine 361. Positions 247 to 257 (TRGLNQDSTDS) are enriched in polar residues. Residues 383 to 467 (PLYCVPASMT…DSLLTRCLEK (85 aa)) enclose the SWIB/MDM2 domain. The SUI1 domain occupies 491-564 (IDITLAQRAS…HLGWLLLEEY (74 aa)).

Belongs to the eIF2D family.

It localises to the cytoplasm. In terms of biological role, translation initiation factor that is able to deliver tRNA to the P-site of the eukaryotic ribosome in a GTP-independent manner. The binding of Met-tRNA(I) occurs after the AUG codon finds its position in the P-site of 40S ribosomes, the situation that takes place during initiation complex formation on some specific RNAs. Its activity in tRNA binding with 40S subunits does not require the presence of the aminoacyl moiety. Possesses the unique ability to deliver non-Met (elongator) tRNAs into the P-site of the 40S subunit. In addition to its role in initiation, can promote release of deacylated tRNA and mRNA from recycled 40S subunits following ABCE1-mediated dissociation of post-termination ribosomal complexes into subunits. In Homo sapiens (Human), this protein is Eukaryotic translation initiation factor 2D (EIF2D).